We begin with the raw amino-acid sequence, 146 residues long: Hemoglobin subunit beta-2 (146 aa).

The Globin domain maps to 2-146 (HWTAEEKQLV…VAHALAYHYH (145 aa)). Heme b contacts are provided by His-63 and His-92.

The protein belongs to the globin family. In terms of assembly, there are three forms of hemoglobin in Sphenodon: A, A' and D. Hb A is a tetramer of two alpha-A and two beta-1, Hb A' is a tetramer of two alpha-a and two beta-2, Hb D is a tetramer of two alpha-D and two beta-2.

Functionally, involved in oxygen transport from the lung to the various peripheral tissues. This is Hemoglobin subunit beta-2 (HBB2) from Sphenodon punctatus (Tuatara).